The primary structure comprises 199 residues: Chaperone protein TorD (199 aa).

Belongs to the TorD/DmsD family. TorD subfamily.

The protein resides in the cytoplasm. Involved in the biogenesis of TorA. Acts on TorA before the insertion of the molybdenum cofactor and, as a result, probably favors a conformation of the apoenzyme that is competent for acquiring the cofactor. The chain is Chaperone protein TorD from Escherichia coli O6:H1 (strain CFT073 / ATCC 700928 / UPEC).